A 376-amino-acid polypeptide reads, in one-letter code: MFLTGFDAPTLNTLWVDKNLSEHTLIQAFSRTNRCFGETKKFGNIFSFRDIRENFDQALKMYADKRGLKDIKSNMVMREFEEVFEKFKDWTEKIKQKYPNPDEILNLEKEEKWDFSDLFGEFLGDYRTVKSYHEFDKDNPYLPSDEFNKYFAAFSQIQEEIRKEKAEKKALEVQEEDLSNEVRKEPQIFSWEYGEGIQANLDYIFHLIKDLYNCDNEQDRQKVLDKIKTAIRTNPEIQVNEDILNEFIEDLGKSFEKEKLEEVWKTEGKLRECLKDFCKKKEESNKKKIINDFLVKGVFLVEWVADKQLNTAKKKGEYSPSWSDTEKLIWKEKSTNLPTMTEKDEDGNFKWRKLITDISEAFKNHFERFIRFVEIR.

Its function is as follows. The N-terminal section of a putative type I restriction enzyme that if reconstituted might recognize 5'-GAN(7)TAY-3' and cleave a random distance away. Subunit R is required for both nuclease and ATPase activities, but not for modification. This is Putative type I restriction enzyme MpnIIP endonuclease subunit N-terminal part from Mycoplasma pneumoniae (strain ATCC 29342 / M129 / Subtype 1) (Mycoplasmoides pneumoniae).